A 416-amino-acid polypeptide reads, in one-letter code: FBD-associated F-box protein At3g52670 (416 aa).

Positions 9-62 (EDRMNQLPEDLILRILSFLPTELVIATSVLSKQWRSLWKLVPNLEFDSDDYESE) constitute an F-box domain. The region spanning 327–378 (KWNEPKYVPECLLSHLETFVWIRYDWEREEEKEVATYILRNARWLKKGTIST) is the FBD domain.

The sequence is that of FBD-associated F-box protein At3g52670 from Arabidopsis thaliana (Mouse-ear cress).